We begin with the raw amino-acid sequence, 66 residues long: Large ribosomal subunit protein bL35 (66 aa).

Residues 1 to 16 (MPKMKTHKGSAKRFKK) are compositionally biased toward basic residues. Residues 1-24 (MPKMKTHKGSAKRFKKTGTGQLKR) are disordered.

The protein belongs to the bacterial ribosomal protein bL35 family.

This is Large ribosomal subunit protein bL35 from Anoxybacillus flavithermus (strain DSM 21510 / WK1).